The primary structure comprises 636 residues: Protein cueball (636 aa).

The first 27 residues, 1-27 (MKLCTSQQFGVAVLFIVLNICSPLADA), serve as a signal peptide directing secretion. At 28–517 (SPIAWDFAVT…ADGPSSLRSG (490 aa)) the chain is on the extracellular side. Residues Asn83 and Asn109 are each glycosylated (N-linked (GlcNAc...) asparagine). LDL-receptor class B repeat units lie at residues 122-169 (RNLF…DICR), 170-214 (RQLY…DQLS), and 215-260 (DRIF…TEDT). Asn190 carries N-linked (GlcNAc...) asparagine glycosylation. Asn285 and Asn339 each carry an N-linked (GlcNAc...) asparagine glycan. 2 EGF-like domains span residues 350–384 (RMDA…ARCE) and 419–456 (EYYK…TRCE). Cystine bridges form between Cys359-Cys372, Cys374-Cys383, Cys423-Cys433, Cys427-Cys444, and Cys446-Cys455. N-linked (GlcNAc...) asparagine glycans are attached at residues Asn449, Asn458, and Asn493. Residues 518 to 538 (SVIIVLVVGIVSSLALVAVIV) form a helical membrane-spanning segment. At 539–636 (HGLRLIYKPK…IHNMEDDLLT (98 aa)) the chain is on the cytoplasmic side.

This sequence belongs to the cueball family.

The protein localises to the cell membrane. Its function is as follows. Has a role in spermatogenesis and oogenesis. This chain is Protein cueball, found in Drosophila virilis (Fruit fly).